Reading from the N-terminus, the 227-residue chain is MTTLFDILNTLNNNNNNNNNYAGCKRQHSINKRVDIIPSMDVTLTNDKLIIETELTGVSKNDIDINIKDSILIIQGEKKKSIIKHQQQQQHQQQQQQQQQQQQQQQQQQQQQQQQQQQQQQQLENSNKENDEPSIEEFEEDVKSKSELNKTTLNTTENKDEDKTTQNISKKFISERSFGNFKRYLNLSEILYQLDLNSINTQFENGLLTITIKKKFDSSNTIKININ.

A sHSP domain is found at 31–227; that stretch reads NKRVDIIPSM…SSNTIKININ (197 aa). Residues 119–164 are disordered; sequence QQQQLENSNKENDEPSIEEFEEDVKSKSELNKTTLNTTENKDEDKT.

It belongs to the small heat shock protein (HSP20) family.

The protein is Small heat shock protein hspG3 (hspG3) of Dictyostelium discoideum (Social amoeba).